The primary structure comprises 181 residues: Probable GTP-binding protein EngB (181 aa).

The EngB-type G domain occupies 18–181 (PKNEICFVGR…LQDLVNNLFN (164 aa)). GTP-binding positions include 26 to 33 (GRSNVGKS), 52 to 56 (GKTKL), 70 to 73 (DLPG), 137 to 140 (TKRD), and 164 to 166 (VSI). Mg(2+)-binding residues include S33 and T54.

This sequence belongs to the TRAFAC class TrmE-Era-EngA-EngB-Septin-like GTPase superfamily. EngB GTPase family. Mg(2+) is required as a cofactor.

Necessary for normal cell division and for the maintenance of normal septation. In Mycoplasma mobile (strain ATCC 43663 / 163K / NCTC 11711) (Mesomycoplasma mobile), this protein is Probable GTP-binding protein EngB.